A 227-amino-acid polypeptide reads, in one-letter code: Trypsin (227 aa).

Residues 1–223 (IVGGEDANVQ…YYDVLMEQIN (223 aa)) enclose the Peptidase S1 domain. Cys-27 and Cys-43 are disulfide-bonded. Catalysis depends on charge relay system residues His-42 and Asp-88. 2 disulfides stabilise this stretch: Cys-150-Cys-164 and Cys-175-Cys-199. The active-site Charge relay system is the Ser-179.

The protein belongs to the peptidase S1 family.

The catalysed reaction is Preferential cleavage: Arg-|-Xaa, Lys-|-Xaa.. The sequence is that of Trypsin from Saccharopolyspora erythraea (Streptomyces erythraeus).